We begin with the raw amino-acid sequence, 400 residues long: Tyrosine--tRNA ligase (400 aa).

Residues 45-54 (PTAPDLHLGH) carry the 'HIGH' region motif. The 'KMSKS' region signature appears at 230–234 (KMSKS). Lys233 contacts ATP. The 61-residue stretch at 339-399 (EWIARVLVIA…GKRRFAKVII (61 aa)) folds into the S4 RNA-binding domain.

It belongs to the class-I aminoacyl-tRNA synthetase family. TyrS type 2 subfamily. In terms of assembly, homodimer.

The protein resides in the cytoplasm. The enzyme catalyses tRNA(Tyr) + L-tyrosine + ATP = L-tyrosyl-tRNA(Tyr) + AMP + diphosphate + H(+). Catalyzes the attachment of tyrosine to tRNA(Tyr) in a two-step reaction: tyrosine is first activated by ATP to form Tyr-AMP and then transferred to the acceptor end of tRNA(Tyr). The chain is Tyrosine--tRNA ligase from Helicobacter hepaticus (strain ATCC 51449 / 3B1).